A 338-amino-acid chain; its full sequence is Dodecaprenyl-phosphate galacturonate synthase (338 aa).

The next 2 membrane-spanning stretches (helical) occupy residues 254–274 (FFGS…LYLG) and 289–309 (MLMV…TGIL).

Belongs to the glycosyltransferase 2 family.

The protein localises to the cell membrane. It catalyses the reaction di-trans,nona-cis-dodecaprenyl phosphate + UDP-alpha-D-galacturonate = beta-D-galacturonosyl di-trans,nona-cis-dodecaprenyl phosphate + UDP. Glycosyltransferase that catalyzes the synthesis of dodecaprenyl-phosphate galacturonate (Dod-P-GalA), likely from UDP-GalA and dodecaprenyl-phosphate. Dod-P-GalA is the lipid donor required for GalA transfer to lipopolysaccharide (LPS) specific residues catalyzed by the GalA transferases RgtA, RgtB, RgtC and RgtD. The chain is Dodecaprenyl-phosphate galacturonate synthase from Rhizobium johnstonii (strain DSM 114642 / LMG 32736 / 3841) (Rhizobium leguminosarum bv. viciae).